Reading from the N-terminus, the 610-residue chain is Isocitrate dehydrogenase kinase/phosphatase (610 aa).

ATP contacts are provided by residues 359 to 365 (APGFKGT) and K380. The active site involves D419.

The protein belongs to the AceK family.

It is found in the cytoplasm. The enzyme catalyses L-seryl-[isocitrate dehydrogenase] + ATP = O-phospho-L-seryl-[isocitrate dehydrogenase] + ADP + H(+). Functionally, bifunctional enzyme which can phosphorylate or dephosphorylate isocitrate dehydrogenase (IDH) on a specific serine residue. This is a regulatory mechanism which enables bacteria to bypass the Krebs cycle via the glyoxylate shunt in response to the source of carbon. When bacteria are grown on glucose, IDH is fully active and unphosphorylated, but when grown on acetate or ethanol, the activity of IDH declines drastically concomitant with its phosphorylation. The polypeptide is Isocitrate dehydrogenase kinase/phosphatase (Rhodopseudomonas palustris (strain ATCC BAA-98 / CGA009)).